The sequence spans 132 residues: Bombinin-like peptides (132 aa).

The first 18 residues, 1 to 18, serve as a signal peptide directing secretion; sequence MNFKYIIAVSFLIASAYA. The propeptide occupies 19-42; the sequence is RSEEYDIQSLSQRDVLEEESLRKI. F68 carries the phenylalanine amide modification. The propeptide occupies 72–112; that stretch reads TAEDHEVMKRLEAAMRDLDSLDYPEEASERETRGFNQEEKE. Residue L131 is modified to Leucine amide.

The protein belongs to the bombinin family. In terms of tissue distribution, expressed by the skin glands.

The protein resides in the secreted. Its function is as follows. Has antimicrobial activity against Gram-negative bacterium E.coli (MIC=26.3 uM), Gram-positive bacterium S.aureus (MIC=26.3 uM) and yeast C.albicans (MIC=52.5 uM). Has moderate hemolytic activity towards human erythrocytes at a concentration of 52.2 uM. Has no antimicrobial activity at concentrations up to 161 uM. Has moderate hemolytic activity towards human erythrocytes at a concentration of 40.3 uM. This is Bombinin-like peptides from Bombina orientalis (Oriental fire-bellied toad).